A 94-amino-acid chain; its full sequence is Integration host factor subunit beta (94 aa).

Belongs to the bacterial histone-like protein family. As to quaternary structure, heterodimer of an alpha and a beta chain.

Functionally, this protein is one of the two subunits of integration host factor, a specific DNA-binding protein that functions in genetic recombination as well as in transcriptional and translational control. The chain is Integration host factor subunit beta from Pseudomonas paraeruginosa (strain DSM 24068 / PA7) (Pseudomonas aeruginosa (strain PA7)).